The following is a 184-amino-acid chain: MIALPPQPDLDLASLVRTIPDFPRPGIQFRDITTLIGDAVGFAESVRRLSACAAAYRPDLIVAVEARGFLFGAAMATAMGLGVVPVRKAGKLPGVTIGVDYELEYGTDRLELHEGAVLPGHRVVLVDDLLATGGTILATAALMRSVGAEVAAALFVIDLPDLGGSARLGAAGLRCETLIAFNGD.

This sequence belongs to the purine/pyrimidine phosphoribosyltransferase family. As to quaternary structure, homodimer.

It localises to the cytoplasm. It catalyses the reaction AMP + diphosphate = 5-phospho-alpha-D-ribose 1-diphosphate + adenine. It functions in the pathway purine metabolism; AMP biosynthesis via salvage pathway; AMP from adenine: step 1/1. Its function is as follows. Catalyzes a salvage reaction resulting in the formation of AMP, that is energically less costly than de novo synthesis. This chain is Adenine phosphoribosyltransferase, found in Sphingopyxis alaskensis (strain DSM 13593 / LMG 18877 / RB2256) (Sphingomonas alaskensis).